A 271-amino-acid polypeptide reads, in one-letter code: Phosphatidylinositol transfer protein beta isoform (271 aa).

The residue at position 215 (lysine 215) is an N6-acetyllysine. Serine 262 is modified (phosphoserine).

Belongs to the PtdIns transfer protein family. PI transfer class I subfamily. Post-translationally, constitutive phosphorylation of Ser-262 has no effect on phospholipid transfer activity but is required for Golgi targeting. In terms of tissue distribution, expressed abundantly in brain, kidney, liver, and lung, but in a lesser amount in testis.

It localises to the golgi apparatus. The protein resides in the golgi apparatus membrane. The protein localises to the endoplasmic reticulum membrane. The catalysed reaction is a 1,2-diacyl-sn-glycero-3-phosphocholine(in) = a 1,2-diacyl-sn-glycero-3-phosphocholine(out). It catalyses the reaction a 1,2-diacyl-sn-glycero-3-phospho-(1D-myo-inositol)(in) = a 1,2-diacyl-sn-glycero-3-phospho-(1D-myo-inositol)(out). The enzyme catalyses an N-(acyl)-sphingosylphosphocholine(in) = an N-(acyl)-sphingosylphosphocholine(out). Its activity is regulated as follows. Phosphatidylinositol transfer activity is inhibited by N-ethylmaleimide. Its function is as follows. Catalyzes the transfer of phosphatidylinositol between membranes. Also catalyzes the transfer of phosphatidylcholine and sphingomyelin between membranes. Required for COPI-mediated retrograde transport from the Golgi to the endoplasmic reticulum; phosphatidylinositol and phosphatidylcholine transfer activity is essential for this function. This is Phosphatidylinositol transfer protein beta isoform (Pitpnb) from Rattus norvegicus (Rat).